The sequence spans 243 residues: Small ribosomal subunit protein uS3 (243 aa).

The KH type-2 domain occupies 39 to 110; the sequence is IRTFIQKKYS…QVRINVVEVE (72 aa). A disordered region spans residues 221–243; it reads GAIPRRKGSRKPQQFEDRSNENS. Positions 233-243 are enriched in basic and acidic residues; the sequence is QQFEDRSNENS.

The protein belongs to the universal ribosomal protein uS3 family. As to quaternary structure, part of the 30S ribosomal subunit. Forms a tight complex with proteins S10 and S14.

Its function is as follows. Binds the lower part of the 30S subunit head. Binds mRNA in the 70S ribosome, positioning it for translation. In Prochlorococcus marinus subsp. pastoris (strain CCMP1986 / NIES-2087 / MED4), this protein is Small ribosomal subunit protein uS3.